A 284-amino-acid polypeptide reads, in one-letter code: 4-diphosphocytidyl-2-C-methyl-D-erythritol kinase (284 aa).

Residue lysine 14 is part of the active site. 98–108 (PMGGGIGGGSS) contacts ATP. Aspartate 140 is an active-site residue.

The protein belongs to the GHMP kinase family. IspE subfamily.

It catalyses the reaction 4-CDP-2-C-methyl-D-erythritol + ATP = 4-CDP-2-C-methyl-D-erythritol 2-phosphate + ADP + H(+). It participates in isoprenoid biosynthesis; isopentenyl diphosphate biosynthesis via DXP pathway; isopentenyl diphosphate from 1-deoxy-D-xylulose 5-phosphate: step 3/6. In terms of biological role, catalyzes the phosphorylation of the position 2 hydroxy group of 4-diphosphocytidyl-2C-methyl-D-erythritol. This is 4-diphosphocytidyl-2-C-methyl-D-erythritol kinase from Shewanella woodyi (strain ATCC 51908 / MS32).